A 285-amino-acid chain; its full sequence is MEDRWQECMDFLAVSIARKAGSVVCAALKEDVSIMVKTSLAPADLVTATDQKVEEMIISSIKEKYPSHSFIGEESVAAGAGSTLTDNPTWIIDPIDGTTNFVHRFPFVAVSIGFAVHKQVEFGVVYSCVEDKMYTGRKGKGSFCNGQKLQVSGQKDITKSMIITELGSNRNPEFIKTVSLSNMERLLCIPIHGIRAVGTAAVNMCLVATGGADAYYEMGLHCWDMAAASVIVTEAGGTILDATGGLFDLMSCRIISASSREIAERIAKELQIIPLERDDGKSTNS.

E73, D93, I95, and D96 together coordinate Mg(2+). E73 lines the substrate pocket. Substrate is bound by residues 95-98 (IDGT), 198-200 (GTA), E217, and D224. D224 serves as a coordination point for Mg(2+).

This sequence belongs to the inositol monophosphatase superfamily. Homodimer. Mg(2+) serves as cofactor.

Its subcellular location is the cytoplasm. It catalyses the reaction a myo-inositol phosphate + H2O = myo-inositol + phosphate. The enzyme catalyses 1D-myo-inositol 1-phosphate + H2O = myo-inositol + phosphate. It carries out the reaction 1D-myo-inositol 2-phosphate + H2O = myo-inositol + phosphate. The catalysed reaction is 1D-myo-inositol 3-phosphate + H2O = myo-inositol + phosphate. It catalyses the reaction 1D-myo-inositol 4-phosphate + H2O = myo-inositol + phosphate. The enzyme catalyses 1D-myo-inositol 5-phosphate + H2O = myo-inositol + phosphate. It carries out the reaction 1D-myo-inositol 6-phosphate + H2O = myo-inositol + phosphate. The catalysed reaction is scyllo-inositol 1-phosphate + H2O = scyllo-inositol + phosphate. It catalyses the reaction alpha-D-galactose 1-phosphate + H2O = D-galactose + phosphate. The enzyme catalyses alpha-D-glucose 1-phosphate + H2O = D-glucose + phosphate. It carries out the reaction D-glucose 6-phosphate + H2O = D-glucose + phosphate. The catalysed reaction is beta-D-fructose 1-phosphate + H2O = D-fructose + phosphate. It catalyses the reaction glycerol 2-phosphate + H2O = glycerol + phosphate. The enzyme catalyses adenosine 2'-phosphate + H2O = adenosine + phosphate. The protein operates within polyol metabolism; myo-inositol biosynthesis; myo-inositol from D-glucose 6-phosphate: step 2/2. With respect to regulation, inhibited by Li(+), Ca(2+) and Mn(2+), but also by Mg(2+) at concentrations above 3 mM. Phosphatase involved in the dephosphorylation of myo-inositol monophosphate to generate myo-inositol. Is also able to dephosphorylate scyllo-inositol-phosphate, myo-inositol 1,4-diphosphate, scyllo-inositol-1,3-diphosphate and scyllo-inositol-1,4-diphosphate. Also dephosphorylates in vitro other sugar-phosphates including D-galactose-1-phosphate, glucose-1-phosphate, glucose-6-phosphate, fructose-1-phosphate, beta-glycerophosphate and 2'-AMP. Responsible for the provision of inositol required for synthesis of phosphatidylinositol and polyphosphoinositides, and involved in maintaining normal brain function. Has been implicated as the pharmacological target for lithium Li(+) action in brain. This is Inositol monophosphatase 1 (impa1) from Xenopus laevis (African clawed frog).